Reading from the N-terminus, the 457-residue chain is Glycoprotein endo-alpha-1,2-mannosidase-like protein (457 aa).

Topologically, residues 1 to 8 (MARRRRRA) are cytoplasmic. A helical; Signal-anchor for type II membrane protein membrane pass occupies residues 9–29 (CIALFLVLLFAFGTLMGLRTL). The Lumenal portion of the chain corresponds to 30 to 457 (KAPDGLPALG…FIKEKEQWLM (428 aa)). The segment at 46-93 (PFERRPEGAPAPAARAPAAPAAPPPPPPPPRTADPGGSPGPAPAEAEP) is disordered. The span at 53-64 (GAPAPAARAPAA) shows a compositional bias: low complexity. A compositionally biased stretch (pro residues) spans 65 to 87 (PAAPPPPPPPPRTADPGGSPGPA).

It belongs to the glycosyl hydrolase 99 family.

It is found in the golgi apparatus membrane. In Homo sapiens (Human), this protein is Glycoprotein endo-alpha-1,2-mannosidase-like protein (MANEAL).